A 395-amino-acid polypeptide reads, in one-letter code: Type II restriction enzyme BsuFI (395 aa).

Homodimer. Mg(2+) is required as a cofactor.

It catalyses the reaction Endonucleolytic cleavage of DNA to give specific double-stranded fragments with terminal 5'-phosphates.. Its function is as follows. A P subtype restriction enzyme that recognizes the double-stranded sequence 5'-CCGG-3' and cleaves after C-1. The sequence is that of Type II restriction enzyme BsuFI (hsdFR) from Bacillus subtilis.